A 182-amino-acid chain; its full sequence is Interferon gamma 1 (182 aa).

The N-terminal stretch at 1 to 21 is a signal peptide; the sequence is MIAQNMTIFFWGVCLLTSGWA. N-linked (GlcNAc...) asparagine glycosylation is present at Asn-93.

It belongs to the type II (or gamma) interferon family. As to quaternary structure, homodimer. As to expression, highly expressed in spleen. Also detected at lower levels in brain, gill, kidney, heart, intestine and muscle. In immune cell populations, has highest expression in peripheral blood leukocytes and splenocytes. Detected in kidney-derived monocytes, neutrophils, macrophages and leukocytes.

It localises to the secreted. Cytokine which binds to interferon gamma receptor 1-like (ifngr1l). Has activating effects on primary macrophages and neutrophils. Induces nitric oxide production and phagocytic responses in macrophages. Primes macrophages and neutrophils for production of reactive oxygen intermediates (ROI). Stimulates phosphorylation and nuclear localization of the JAK/STAT signal transducer stat1. Promotes increased expression of a number of genes important for macrophage activity, including the interferon regulatory factors irf1, irf2, irf8 and irf9. In Carassius auratus (Goldfish), this protein is Interferon gamma 1.